Consider the following 875-residue polypeptide: Phosphoenolpyruvate carboxylase (875 aa).

Active-site residues include His-137 and Lys-542.

This sequence belongs to the PEPCase type 1 family. Mg(2+) serves as cofactor.

It catalyses the reaction oxaloacetate + phosphate = phosphoenolpyruvate + hydrogencarbonate. In terms of biological role, forms oxaloacetate, a four-carbon dicarboxylic acid source for the tricarboxylic acid cycle. In Pseudomonas entomophila (strain L48), this protein is Phosphoenolpyruvate carboxylase.